The following is a 45-amino-acid chain: Osteocalcin 1 (45 aa).

A Gla domain is found at 1–41 (AAGQLSLTQLESLREVCELNLACEHMMDTEGIIAAYTAYYG). Positions 11, 15, 18, and 24 each coordinate Ca(2+). 4-carboxyglutamate occurs at positions 11, 15, and 18. A disulfide bridge links cysteine 17 with cysteine 23.

This sequence belongs to the osteocalcin/matrix Gla protein family. Gamma-carboxyglutamate residues are formed by vitamin K dependent carboxylation by GGCX. These residues are essential for the binding of calcium.

The protein resides in the secreted. In terms of biological role, the carboxylated form is one of the main organic components of the bone matrix, which constitutes 1-2% of the total bone protein. The carboxylated form binds strongly to apatite and calcium. This is Osteocalcin 1 from Diplodus sargus (White seabream).